A 162-amino-acid polypeptide reads, in one-letter code: UPF0114 protein PFLU_5318 (162 aa).

The next 3 membrane-spanning stretches (helical) occupy residues L15–F35, L53–V73, and L136–L156.

This sequence belongs to the UPF0114 family.

Its subcellular location is the cell membrane. In Pseudomonas fluorescens (strain SBW25), this protein is UPF0114 protein PFLU_5318.